Consider the following 205-residue polypeptide: MRGKFITLEGIDGAGKTTHLRWLEYFLKERGKNVMVTREPGGTPLGEALRDILLDSRQTMHAETEALLMFAARREHLDKVILPALSRGEWVISDRFTDASFAYQGGGRGLSLQKLNELECWVQGEFQPDVTLYLDVSIASGRQRTSNIRQADRFEKEQDEFFRRVREAYLERAKEFPERIRVIDANQSLEDVRRSVEKSIATIYA.

ATP is bound at residue 10–17 (GIDGAGKT).

Belongs to the thymidylate kinase family.

The catalysed reaction is dTMP + ATP = dTDP + ADP. Phosphorylation of dTMP to form dTDP in both de novo and salvage pathways of dTTP synthesis. The chain is Thymidylate kinase from Nitrosospira multiformis (strain ATCC 25196 / NCIMB 11849 / C 71).